Consider the following 95-residue polypeptide: Aspartyl/glutamyl-tRNA(Asn/Gln) amidotransferase subunit C (95 aa).

Belongs to the GatC family. In terms of assembly, heterotrimer of A, B and C subunits.

The catalysed reaction is L-glutamyl-tRNA(Gln) + L-glutamine + ATP + H2O = L-glutaminyl-tRNA(Gln) + L-glutamate + ADP + phosphate + H(+). It catalyses the reaction L-aspartyl-tRNA(Asn) + L-glutamine + ATP + H2O = L-asparaginyl-tRNA(Asn) + L-glutamate + ADP + phosphate + 2 H(+). Its function is as follows. Allows the formation of correctly charged Asn-tRNA(Asn) or Gln-tRNA(Gln) through the transamidation of misacylated Asp-tRNA(Asn) or Glu-tRNA(Gln) in organisms which lack either or both of asparaginyl-tRNA or glutaminyl-tRNA synthetases. The reaction takes place in the presence of glutamine and ATP through an activated phospho-Asp-tRNA(Asn) or phospho-Glu-tRNA(Gln). The protein is Aspartyl/glutamyl-tRNA(Asn/Gln) amidotransferase subunit C of Azorhizobium caulinodans (strain ATCC 43989 / DSM 5975 / JCM 20966 / LMG 6465 / NBRC 14845 / NCIMB 13405 / ORS 571).